An 82-amino-acid polypeptide reads, in one-letter code: uncharacterized protein (82 aa).

This is an uncharacterized protein from Orgyia pseudotsugata multicapsid polyhedrosis virus (OpMNPV).